Here is a 91-residue protein sequence, read N- to C-terminus: CRISPR-associated endoribonuclease Cas2 (91 aa).

Asp14 is a Mg(2+) binding site.

This sequence belongs to the CRISPR-associated endoribonuclease Cas2 protein family. As to quaternary structure, homodimer, forms a heterotetramer with a Cas1 homodimer. It depends on Mg(2+) as a cofactor.

Its function is as follows. CRISPR (clustered regularly interspaced short palindromic repeat), is an adaptive immune system that provides protection against mobile genetic elements (viruses, transposable elements and conjugative plasmids). CRISPR clusters contain sequences complementary to antecedent mobile elements and target invading nucleic acids. CRISPR clusters are transcribed and processed into CRISPR RNA (crRNA). Functions as a ssRNA-specific endoribonuclease. Involved in the integration of spacer DNA into the CRISPR cassette. The polypeptide is CRISPR-associated endoribonuclease Cas2 (Nanoarchaeum equitans (strain Kin4-M)).